We begin with the raw amino-acid sequence, 513 residues long: Membrane-bound transcription factor site-2 protease homolog (513 aa).

Topologically, residues methionine 1–tryptophan 60 are cytoplasmic. The helical transmembrane segment at phenylalanine 61–leucine 81 threads the bilayer. Over glutamine 82–serine 107 the chain is Lumenal. A helical membrane pass occupies residues leucine 108 to glycine 128. Position 125 (histidine 125) interacts with Zn(2+). Glutamate 126 is a catalytic residue. Histidine 129 contributes to the Zn(2+) binding site. Topologically, residues histidine 129–glycine 137 are cytoplasmic. A helical transmembrane segment spans residues isoleucine 138–phenylalanine 158. The Lumenal segment spans residues aspartate 159 to asparagine 182. Residues alanine 183–phenylalanine 203 traverse the membrane as a helical segment. Topologically, residues tyrosine 204 to serine 437 are cytoplasmic. Residues leucine 438–tyrosine 458 form a helical membrane-spanning segment. Topologically, residues leucine 459 to glutamine 485 are lumenal. The chain crosses the membrane as a helical span at residues valine 486–glycine 506. The Cytoplasmic portion of the chain corresponds to leucine 507 to tryptophan 513.

It belongs to the peptidase M50A family. Requires Zn(2+) as cofactor. In terms of tissue distribution, expressed in the vasculature of roots, cotyledons and leaves.

It is found in the golgi apparatus membrane. In terms of biological role, metalloprotease that catalyzes the second step (site-2 cleavage) in the proteolytic activation of various factors, after site-1 cleavage. Part of a regulated intramembrane proteolysis (RIP) cascade. After ER stress, cleaves BZIP17 and BZIP28 proteins which function as stress sensors and transducers in ER stress signaling pathway. The N-terminal bZIP component is translocated to the nucleus, where it activates the expression and production of ER chaperones, as well as proteins involved in brassinosteroid (BR) signaling, which is required for stress acclimation and growth. This chain is Membrane-bound transcription factor site-2 protease homolog (S2P), found in Arabidopsis thaliana (Mouse-ear cress).